Here is a 169-residue protein sequence, read N- to C-terminus: Alpha-S2-casein-like B (169 aa).

An N-terminal signal peptide occupies residues 1-15; sequence MKFIILTCLLAVALA.

The protein belongs to the alpha-casein family. In terms of tissue distribution, mammary gland specific. Secreted in milk.

It is found in the secreted. Functionally, important role in the capacity of milk to transport calcium phosphate. The chain is Alpha-S2-casein-like B (Csn1s2b) from Rattus norvegicus (Rat).